Reading from the N-terminus, the 327-residue chain is Phenylalanine--tRNA ligase alpha subunit (327 aa).

Glu252 is a Mg(2+) binding site.

It belongs to the class-II aminoacyl-tRNA synthetase family. Phe-tRNA synthetase alpha subunit type 1 subfamily. In terms of assembly, tetramer of two alpha and two beta subunits. Requires Mg(2+) as cofactor.

It localises to the cytoplasm. It catalyses the reaction tRNA(Phe) + L-phenylalanine + ATP = L-phenylalanyl-tRNA(Phe) + AMP + diphosphate + H(+). The chain is Phenylalanine--tRNA ligase alpha subunit from Photobacterium profundum (strain SS9).